The sequence spans 531 residues: UDP-glucuronosyltransferase 1A7 (531 aa).

Positions 1 to 25 are cleaved as a signal peptide; sequence MAPADVPASLPLGLCLLLASGFGHA. N-linked (GlcNAc...) asparagine glycans are attached at residues asparagine 71, asparagine 293, and asparagine 431. Residues 487 to 503 traverse the membrane as a helical segment; it reads LDVIGFLLAIVLTVVFI.

This sequence belongs to the UDP-glycosyltransferase family. Homodimer. Homooligomer. Interacts with UGT1A1, UGT1A3, UGT1A4, UGT1A6, UGT1A8, UGT1A9 and UGT1A10 to form heterodimers.

It is found in the endoplasmic reticulum membrane. It catalyses the reaction glucuronate acceptor + UDP-alpha-D-glucuronate = acceptor beta-D-glucuronoside + UDP + H(+). The enzyme catalyses 17alpha-estradiol + UDP-alpha-D-glucuronate = 17alpha-estradiol 3-O-(beta-D-glucuronate) + UDP + H(+). The catalysed reaction is prunetin + UDP-alpha-D-glucuronate = prunetin-5-O-beta-D-glucuronide + UDP. It carries out the reaction 5-epi-5-F2t-IsoP + UDP-alpha-D-glucuronate = 5-epi-5-F2t-IsoP-glucuronide + UDP + H(+). It catalyses the reaction (E)-ferulate + UDP-alpha-D-glucuronate = (E)-ferulic acid beta-D-glucuronate ester + UDP. The enzyme catalyses candesartan + UDP-alpha-D-glucuronate = candesartan O-beta-D-glucuronoside + UDP. The catalysed reaction is SN-38 + UDP-alpha-D-glucuronate = SN-38 O-beta-D-glucuronide + UDP + H(+). It carries out the reaction mycophenolate + UDP-alpha-D-glucuronate = mycophenolate 7-O-beta-D-glucuronide + UDP + H(+). In terms of biological role, UDP-glucuronosyltransferase (UGT) that catalyzes phase II biotransformation reactions in which lipophilic substrates are conjugated with glucuronic acid to increase the metabolite's water solubility, thereby facilitating excretion into either the urine or bile. Essential for the elimination and detoxification of drugs, xenobiotics and endogenous compounds. Catalyzes the glucuronidation of endogenous estrogen hormone epiestradiol. Involved in the glucuronidation of F2-isoprostane (5-epi-5-F2t-IsoP). Involved in the glucuronidation of the phytochemical ferulic acid at the carboxylic acid group. Also catalyzes the glucuronidation of the isoflavones genistein, daidzein, glycitein, formononetin, biochanin A and prunetin, which are phytoestrogens with anticancer and cardiovascular properties. Involved in the glucuronidation of the AGTR1 angiotensin receptor antagonist caderastan, a drug which can inhibit the effect of angiotensin II. Involved in the biotransformation of 7-ethyl-10-hydroxycamptothecin (SN-38), the pharmacologically active metabolite of the anticancer drug irinotecan. Also metabolizes mycophenolate, an immunosuppressive agent. The sequence is that of UDP-glucuronosyltransferase 1A7 from Rattus norvegicus (Rat).